We begin with the raw amino-acid sequence, 217 residues long: Octanoyltransferase (217 aa).

The region spanning 32–207 is the BPL/LPL catalytic domain; the sequence is SESPDELWIV…TFSQLLGYQH (176 aa). Substrate-binding positions include 71–78, 138–140, and 151–153; these read RGGQVTYH, SLG, and GLA. Cysteine 169 functions as the Acyl-thioester intermediate in the catalytic mechanism.

It belongs to the LipB family.

The protein localises to the cytoplasm. It catalyses the reaction octanoyl-[ACP] + L-lysyl-[protein] = N(6)-octanoyl-L-lysyl-[protein] + holo-[ACP] + H(+). Its pathway is protein modification; protein lipoylation via endogenous pathway; protein N(6)-(lipoyl)lysine from octanoyl-[acyl-carrier-protein]: step 1/2. In terms of biological role, catalyzes the transfer of endogenously produced octanoic acid from octanoyl-acyl-carrier-protein onto the lipoyl domains of lipoate-dependent enzymes. Lipoyl-ACP can also act as a substrate although octanoyl-ACP is likely to be the physiological substrate. This is Octanoyltransferase from Shewanella sp. (strain W3-18-1).